A 400-amino-acid chain; its full sequence is Imidazolonepropionase (400 aa).

Fe(3+)-binding residues include histidine 70 and histidine 72. Zn(2+) is bound by residues histidine 70 and histidine 72. 4-imidazolone-5-propanoate is bound by residues arginine 79, tyrosine 142, and histidine 175. Residue tyrosine 142 participates in N-formimidoyl-L-glutamate binding. Residue histidine 239 coordinates Fe(3+). Zn(2+) is bound at residue histidine 239. A 4-imidazolone-5-propanoate-binding site is contributed by glutamine 242. Aspartate 314 contributes to the Fe(3+) binding site. Aspartate 314 contributes to the Zn(2+) binding site. 2 residues coordinate N-formimidoyl-L-glutamate: asparagine 316 and glycine 318. Threonine 319 serves as a coordination point for 4-imidazolone-5-propanoate.

Belongs to the metallo-dependent hydrolases superfamily. HutI family. Zn(2+) serves as cofactor. Fe(3+) is required as a cofactor.

The protein resides in the cytoplasm. It carries out the reaction 4-imidazolone-5-propanoate + H2O = N-formimidoyl-L-glutamate. The protein operates within amino-acid degradation; L-histidine degradation into L-glutamate; N-formimidoyl-L-glutamate from L-histidine: step 3/3. Functionally, catalyzes the hydrolytic cleavage of the carbon-nitrogen bond in imidazolone-5-propanoate to yield N-formimidoyl-L-glutamate. It is the third step in the universal histidine degradation pathway. The protein is Imidazolonepropionase of Methylobacterium sp. (strain 4-46).